Here is a 232-residue protein sequence, read N- to C-terminus: Large ribosomal subunit protein uL1 (232 aa).

The protein belongs to the universal ribosomal protein uL1 family. In terms of assembly, part of the 50S ribosomal subunit.

Functionally, binds directly to 23S rRNA. The L1 stalk is quite mobile in the ribosome, and is involved in E site tRNA release. Its function is as follows. Protein L1 is also a translational repressor protein, it controls the translation of the L11 operon by binding to its mRNA. This Xanthomonas axonopodis pv. citri (strain 306) protein is Large ribosomal subunit protein uL1.